The chain runs to 191 residues: Putative 3-methyladenine DNA glycosylase (191 aa).

The protein belongs to the DNA glycosylase MPG family.

This chain is Putative 3-methyladenine DNA glycosylase, found in Cutibacterium acnes (strain DSM 16379 / KPA171202) (Propionibacterium acnes).